Here is a 261-residue protein sequence, read N- to C-terminus: Short-chain-enoyl-CoA hydratase (261 aa).

E114 functions as the Nucleophile in the catalytic mechanism. The Proton acceptor role is filled by E134.

This sequence belongs to the enoyl-CoA hydratase/isomerase family. In terms of assembly, homotetramer.

It carries out the reaction a short-chain (3S)-3-hydroxyacyl-CoA = a short-chain (2E)-enoyl-CoA + H2O. The protein operates within lipid metabolism; butanoate metabolism. Catalyzes the reversible hydration of crotonyl-CoA. Can also use hexenoyl-CoA but not higher analogs. In Clostridium acetobutylicum (strain ATCC 824 / DSM 792 / JCM 1419 / IAM 19013 / LMG 5710 / NBRC 13948 / NRRL B-527 / VKM B-1787 / 2291 / W), this protein is Short-chain-enoyl-CoA hydratase (crt).